The sequence spans 245 residues: Octopine transport system permease protein OccM (245 aa).

A run of 5 helical transmembrane segments spans residues 12-32, 57-77, 96-116, 163-183, and 204-224; these read FVAL…SVAL, FYIF…IYYG, AYWC…AEIM, ILMV…ITGI, and IYLI…WALW. Residues 19–216 form the ABC transmembrane type-1 domain; the sequence is IPLALQLAVF…ILNFIVARLF (198 aa).

It belongs to the binding-protein-dependent transport system permease family. HisMQ subfamily.

The protein localises to the cell inner membrane. In terms of biological role, component of the octopine active transport system probably consisting of four subunits: Q, M, P and T. This chain is Octopine transport system permease protein OccM (occM), found in Rhizobium radiobacter (Agrobacterium tumefaciens).